We begin with the raw amino-acid sequence, 344 residues long: MRILEFDEKRQAAKLHIESEDDLWILHLILEKGDKVVAKTTRDIGLGKESRRIPMTIVLKVDYTEFQEFTNRLRIHGIIEDAPERFGIRGAHHTINLDIGDEIIIIKQQWSKYALDKLKKQADKRSKIIIALVDFDEYLIAIPFEQGIKILSEKSLRSLNEEEGIIEQNALEVATELAEYVKQYNPDAILLAGPGFFKEEVAKKVNNILKNKKVYIDSVSSATRAGLHEILKRDIIDKIMSDYEIAIGAKKMEKAMELLAKQPELVTYGLEQVKNAVEMGAVETVLLIEDLLSSNNQERLAIERILEDIENKRGEIILVPKESPIYFELKNLTGILAILRFRIN.

It belongs to the eukaryotic release factor 1 family. Pelota subfamily. In terms of assembly, monomer. A divalent metal cation serves as cofactor.

It is found in the cytoplasm. Its function is as follows. May function in recognizing stalled ribosomes, interact with stem-loop structures in stalled mRNA molecules, and effect endonucleolytic cleavage of the mRNA. May play a role in the release non-functional ribosomes and degradation of damaged mRNAs. Has endoribonuclease activity. This is Protein pelota homolog from Saccharolobus islandicus (strain M.14.25 / Kamchatka #1) (Sulfolobus islandicus).